The primary structure comprises 3987 residues: MAPQNEPIAIVGSGCRFPGEASSPSKLWDLLREPRDVLSKIDRFSADGFYNKDGHHHGSSNVLHSYQLSEDTRSFDAQFFNIPASEAESMDPQQRFIMEVVYEALESAAIKIEELSGSPTAVYVGVMCNDYAHITYADLESVPKYAATGTALSILANRISYFFNWTGPSMTIDTACSSSLVALHHAVQTLRGGTSKVAVAAGTNLIFTPTNYIAESNVNMLSPTGRSRMWDANADGYARGEGVAAVVLKTLSQAVADGDRIECVIRETGLNQDGRTPGITMPSSVAQAELIRSTYARAGLDVTRESDRPQFFEAHGTGTKAGDPEEAKAIYKAFFGQEDTMDARDTLYVGSIKTIIGHTEGTAGLAGLLKASLAVQNKTLPPNMHFHTLNPDIEPYYGKLQILTSVKPWPALASGVPRRVSVNSFGFGGANAHAIVESYEPSNGAIKVQSSKETAIPFTFSGYSEKSLMSQLTSFLEYLDSHPEPRLRDSAWTLSRRSAFSTRTTVSGTSIERLQEKLQSKIDSKIKDGKALGIRSSSKNDKILGVFTGQGAQWPRMGLRLLQSSATARRIFDDLERSLAELPTEDRPSWSLVQELEREAEDSRVMEAEFSQVLCTAVQVMLVDLLHSVGVSFDIVVGHSSGEIGAAYSAGYLSARDAIRIAYYRGKFGKLACGRDGVAGGMLAAGTDMADAKDLCELDDFVGRLQLAASNSSSSVTLSGDAEAVAWAQFVLEDEKKFARLLKVDTAYHSYHMQPCAEPYIEAMKRAGIQALKPQSDCRWFSSVLEGQEVSAAMSASLANSYWRDNLLQPVMFSQALEQAVSNTSDIGLVLEVGPHAALRGPATLTINDKLGRDVPYFGLLSRNADDVESFSDGIGAVWASLARCVIDFTRVDALLADGPEDQPRLCDNVPGYSWDHQRTYWMESRSSAALRLRPAAHHELLGVRVDSLNREYRWRNFIKPSQLSWTRGHQVQSQLIFPGAGFSVMALEAAKALAPAEKIALVELTDMQVLRAMAFQDENTAVEVICSLSNVIEDPDQANLTANFTCDMCLSKESGFVMAACGAVRLQLGAASSQLLPERTACPVRMNDVNIEHFYSTLWSLGYNYTDMFRSITSLQRTTDAASGIIHTTTEPDYTTSLTLHPATLDVAFQGIFGAMGAPGDGRLWTVLVPTRIKRITINPAVCGGTSGLGVDLPFDASVSVSPIDGVAGDVDIFDSTGVNKAVQVEGLQVAPLVPVTQSDDREVFSDTIWNFQEPDAARDVPKWTLTDEEWEHARYVERACFYYLKQLHDTITAEERDRCEWHPRKMLDWATEVVGVVSRGEHPIIRQEWMNDTWEMLKGPLDELTAKYEDFESLTHVGKNLIPFVKGEFSLLELVRNGGLLEHIYRNTYAFCEYNNYLANLVKQLSHRFPRMDIFEIGAGTGSTTEAVLRGIGDHYSSYTYTDLSAGFFPNAQETFKEHDAKMIYKIYDAEKEPGKQGYTERTYDLVIASNVLHATHSLETTLTNARKLLKPGGYLVMLEVTDVNPLRPTFFFGCLPGWWVGENDGRPHHPLVTKERWGELFDRTGFSGLDTSTPSHDVFMAPFSVMLTQAVDRQMALIRQPLQEDNRTTIDHLLILGGTGFTSFMLIEDVKHQLKRYAKHVIVVETLEALEASHFHSRQMLLSLVELDAPVFSPFTPERFAALQMLTEKCRNVLWVVRGASGEQPYANMMNGVARCLVGEQPDMRFQFVDFDMADKVDAGFIVRSLLQLQISDAWHTFIEPYRPVWTLEREVRYIQGQAHIPRYSPSLRRNLQYNSWRRTIRETVDPSSKYVILTHANGYYDLEEDNSPRPDPMAEDDRMAINVSRSSTVAVEIDGIGHLYILTGECELSGQRVLAFSSHNASRVQVKKDWVVSIGILSSDEPALIQMVTNVCLGTMLLNQTPRNGSLLVYEPTVALARILTALTSAEEPGRVLFTTTNRAKLDSGVAFSFIHPSSPDSSIARWVPAGVAGFVDASGGRKEQNMAARFARHLSSQCRVISMEGFYSNSSHQWGNAGGNSLSALLQHSTGLFTQGYKQCKQNQVQELSLDDVIGASTEHKEIRILNWKSQSKALVKLSPVQDEITFKGDRTYLLVGLTGELGRSLCRWMVQRGARYVVLTSRKPDVEPAWLELMQSYGAHIEVMAMDATDRKSTYNTVRKVQQTLPPVAGVGNGAMVLNDGLFNVISHQDFNQTLRPKVDGTTYLNELFQSPDLDFFIVFSSLAYVTGNFGQTSYAAANAFMASLVEGRKRRGLPGSVMNLAGIFGLGYITRTDRSILERLGKLGYANISEYDFHQFFAEAVLSGVPGSGRCHEISSALRPIDPDGETNPPAWLDMPRLSYYRHTKHAFTESGDTKSLSVRSQLKEQTTMEDVQRVLTNGLILTLYKQLGLDPEDDAISPDTSLVELGIDSLVAVDMRVWFTKELDLDMPVLKLLGGATVAAMVEDTMERMSPDLIPNVAQKDVTVAADRPSAPSDGVPAVGRSTAVSTTEHNSEEQESHAMETQELDESTTSGGECSSTKESSSSEATPPPSSVMSEDLAKVEETASIDGPKYVRKVKMGYGSLQFFFLVKHLDDPTVLNMQFRLPLQGSIKIPDLKYAVKMLGQRHEALRTAFFVDAENDDEPTQGVLETSPLQLETMQVTDSKEARRVCEDVQKYVFNIESGETIRILLLSITPSSHWLVLSFHHISIDGFSFNILLDEINALYQGQHLPPVKTQFTDVMCKQRQDLQAGFRRSELAYWQQVLGKIPDPIPLFPVAKLSSRLPVTRYHFEEAPMASIDAATAEQIRKQCRALKATRFHFFMTVLRIFLFAFLDTDELCIGFADASRADSGVSRTVGYLVNMLSLKFQRKPSQTFAQKVEEARKQSYAALANSTVPFNALLEKLEPPRSAAYTPVFQVFMDYLQHKFTAPKGLGVVEEQVYAHLTHNFFDLAVDINDVSASEILVRFRMQQYLYSASSVSLLLKSYVQLVKMCAYMEPNKAIGEPVPYDAQDIERAISLGQGPVVSSQWPSTPIERILDVAQARPEAPALVDGEGARLSYMEMIDRAHSIAGCLLTAGVAEGSTVGVYQEPTADSICSLLAIWIIGAVYLPLDRRVPCSRLSSIVQDCQPSAILCHERTLSDTPYLEATKQTAIITVPVNVAGIEAAPVPLNTGNGDQTSIILYTSGSTGVPKGLPIRHVSLLNQIEAMTTTFGVGAEMVLQQSAPSFDVSMQQILMALCNGGALYVVPNETRLDPVTITRLIASEKITWVHATPSEFTQWLRHGSAHLRAAKDWKFAFSSGEALSSDLVKGFEALRRPDVKLINVYGPAEAGVITGTEIDTTHVSAEPRSPISLGSPLANIAVYVVDRNLRPVPVGVSGEIVVAGAGNISGYLNRFELTAKLFLPDTITPRGYYPGQLATLYRSGDIGRYSPDGQLYYEGRIAGDTQVKLNGIRIDLKDVESAILETSGGEIVNAIVTDRRSPDFLVAHVELKADFPEAERKNFLTYIQQCLPLPKYMCPAMFIPLDHVPLNSHGKLDRRAIAARPLPTVDGDDQQGDADLSETELALRELWTGCLPEDVVKLTSISATTDFFHLGGNSYLLVRLQRLIRDRFNVSVPVMALYDASTLMAMALKIRNSQSLAVIDWDTETSVAQSLGASPCAEQPTAPRKTTDLTVVLTGATGYLGSRIMKALIASEQVSQIHCVAVRGHSAGVPRELAHSSDKLILHGGHLEDPLLGMSEEEFTFVARETDLVIHSGANRSFWDHYERLRGPNVLSTKTLVDLALQNQAPLHFISSGGVHLLCSGEDYAAESLASYLPPTDGSNGYIASKWASEVYLEKAAQKTSLPVYVHRLTPAPDVTPDAPMELLEEMSALAVKLQALPAPSGWTGTFDLTPAEALATGIAAAAVGAQAPMLESHQSARFIHHPSQVKMTMDHVAKYLDMLPSAEGFERLPPLQWAGRAKREGLTWHFSSTDFITMGG.

A Ketosynthase family 3 (KS3) domain is found at 5-438 (NEPIAIVGSG…GANAHAIVES (434 aa)). Residues Cys-176, His-315, and His-358 each act as for beta-ketoacyl synthase activity in the active site. The segment at 546 to 872 (VFTGQGAQWP…RNADDVESFS (327 aa)) is malonyl-CoA:ACP transacylase (MAT) domain. Positions 939 to 1072 (HELLGVRVDS…GAVRLQLGAA (134 aa)) are N-terminal hotdog fold. One can recognise a PKS/mFAS DH domain in the interval 939–1240 (HELLGVRVDS…VAPLVPVTQS (302 aa)). The segment at 940–1238 (ELLGVRVDSL…LQVAPLVPVT (299 aa)) is dehydratase (DH) domain. The active-site Proton acceptor; for dehydratase activity is His-970. The interval 1087–1240 (MNDVNIEHFY…VAPLVPVTQS (154 aa)) is C-terminal hotdog fold. Catalysis depends on Asp-1147, which acts as the Proton donor; for dehydratase activity. A methyltransferase (MT) domain region spans residues 1399–1583 (YLANLVKQLS…TSTPSHDVFM (185 aa)). A ketoreductase (KR) domain region spans residues 2113 to 2285 (TYLLVGLTGE…LPGSVMNLAG (173 aa)). Positions 2397–2473 (RVLTNGLILT…AMVEDTMERM (77 aa)) constitute a Carrier 1 domain. At Ser-2433 the chain carries O-(pantetheine 4'-phosphoryl)serine. The interval 2489 to 2561 (AADRPSAPSD…PPPSSVMSED (73 aa)) is disordered. Positions 2514–2525 (HNSEEQESHAME) are enriched in basic and acidic residues. A compositionally biased stretch (low complexity) spans 2532-2550 (STTSGGECSSTKESSSSEA). The segment at 2582 to 3001 (MGYGSLQFFF…QLVKMCAYME (420 aa)) is condensation (C) domain. The interval 3042-3448 (LDVAQARPEA…GQLYYEGRIA (407 aa)) is adenylation (A) (KR) domain. The region spanning 3564–3644 (ADLSETELAL…AMALKIRNSQ (81 aa)) is the Carrier 2 domain. Residue Ser-3604 is modified to O-(pantetheine 4'-phosphoryl)serine. Residues 3680-3916 (TVVLTGATGY…TGIAAAAVGA (237 aa)) form a reductase (R) domain region.

It in the C-terminal section; belongs to the NRP synthetase family.

It participates in mycotoxin biosynthesis. Its function is as follows. Hybrid PKS-NRPS synthetase; part of the gene cluster that mediates the biosynthesis of burnettramic acids, an unusual class of bolaamphiphilic pyrrolizidinediones that display potent antibacterial, antifungal, and cytotoxic activities. The first step of the biosynthesis of burnettramic acids is the hydroxylation of proline by the proline hydroxylase buaE to generate 4-hydroxyproline. The PKS-NRPS buaA and trans-enoyl reductase buaC construct the highly reduced polyketide chain, and the condensation (C) domain of buaA then catalyzes the amide bond formation with the activated 4-hydroxyproline. This is followed by the R domain releasing the nascent polyketide-peptide directly via a Dieckmann condensation to afford a tetramic acid fused to the hydroxyproline, generating the bicyclic pyrrolidinedione moiety. The cytochrome P450 monooxygenases buaD and buaG are likely responsible for the multiple hydroxylations on the polyketide chain and its terminus, although in a heterologous context, buaD does not appear to be required. Therefore, while buaG may be a multifunctional cytochrome P450 monooxygenase, it cannot be ruled out that the two secondary alcohols on the polyketide chain could have an acetate origin. Finally, the glycosyltransferase buaB transfers beta-D-mannose to the aglycone burnettramic acid A to form burnettramic acid A. Burnettramic acid B is a minor cis-pyrrolizidine epimer of burnettramic acid A and it is likely that small amounts of it form naturally in acidic environments. In Petromyces alliaceus (Aspergillus alliaceus), this protein is Hybrid PKS-NRPS synthetase buaA.